We begin with the raw amino-acid sequence, 554 residues long: ATP synthase subunit alpha (554 aa).

Residue 173 to 180 (GDRQTGKT) participates in ATP binding. Residues 531–554 (SHLAAEKVRKHVPPSKPTTQRTAG) are disordered.

Belongs to the ATPase alpha/beta chains family. As to quaternary structure, F-type ATPases have 2 components, CF(1) - the catalytic core - and CF(0) - the membrane proton channel. CF(1) has five subunits: alpha(3), beta(3), gamma(1), delta(1), epsilon(1). CF(0) has three main subunits: a(1), b(2) and c(9-12). The alpha and beta chains form an alternating ring which encloses part of the gamma chain. CF(1) is attached to CF(0) by a central stalk formed by the gamma and epsilon chains, while a peripheral stalk is formed by the delta and b chains.

The protein resides in the cell membrane. The enzyme catalyses ATP + H2O + 4 H(+)(in) = ADP + phosphate + 5 H(+)(out). Its function is as follows. Produces ATP from ADP in the presence of a proton gradient across the membrane. The alpha chain is a regulatory subunit. The protein is ATP synthase subunit alpha of Acidothermus cellulolyticus (strain ATCC 43068 / DSM 8971 / 11B).